The following is a 283-amino-acid chain: MTGEQEWVQPSGVWATAVGVARVRALESEREDALFRDPLAQAFAAAGGLWPSSPPLPDDEAARRRRLAVAFSIVVRTKFLDDLLEHATASGVRQVVLLGAGMDSRAFRMAWPEGTRLFEVDTPAPLEFKASVLRQERAVAHCERITVAVDLREDWPSALAAAGHDAAIPTAWIGEGLLIYLPEDAVELLLARIGEQSASGSRMGLTLGSRGVIERFAAGAVPGSAASMWVSEMPDDPVGWLAGHGWEASCHTLRERAVAYGRPMSTLPQHEDGPGGLISAVRR.

S-adenosyl-L-methionine is bound by residues D121 and 150–151; that span reads DL. The disordered stretch occupies residues 264 to 283; that stretch reads MSTLPQHEDGPGGLISAVRR.

It belongs to the UPF0677 family.

In terms of biological role, exhibits S-adenosyl-L-methionine-dependent methyltransferase activity. In Streptomyces coelicolor (strain ATCC BAA-471 / A3(2) / M145), this protein is Putative S-adenosyl-L-methionine-dependent methyltransferase SCO7813.